The chain runs to 347 residues: Protein RecA (347 aa).

Residue 65 to 72 (GPESSGKT) participates in ATP binding. A disordered region spans residues 328-347 (SPAQPEAPAAGEKPEQEEEF).

Belongs to the RecA family.

Its subcellular location is the cytoplasm. Can catalyze the hydrolysis of ATP in the presence of single-stranded DNA, the ATP-dependent uptake of single-stranded DNA by duplex DNA, and the ATP-dependent hybridization of homologous single-stranded DNAs. It interacts with LexA causing its activation and leading to its autocatalytic cleavage. The sequence is that of Protein RecA from Vibrio parahaemolyticus serotype O3:K6 (strain RIMD 2210633).